The sequence spans 220 residues: Protein LURP-one-related 12 (220 aa).

It belongs to the LOR family.

Functionally, might be related to the phospholipid scramblase and tubby-like superfamily of membrane tethered transcription factors. The polypeptide is Protein LURP-one-related 12 (Arabidopsis thaliana (Mouse-ear cress)).